The following is a 1029-amino-acid chain: Beta-galactosidase (1029 aa).

The substrate site is built by asparagine 108 and aspartate 207. Position 207 (aspartate 207) interacts with Na(+). Mg(2+) is bound by residues glutamate 422, histidine 424, and glutamate 467. Residues glutamate 467 and 543-546 each bind substrate; that span reads EYAH. Glutamate 467 (proton donor) is an active-site residue. Glutamate 543 acts as the Nucleophile in catalysis. Asparagine 603 lines the Mg(2+) pocket. Residues phenylalanine 607 and asparagine 610 each contribute to the Na(+) site. Substrate-binding residues include asparagine 610 and tryptophan 1005.

This sequence belongs to the glycosyl hydrolase 2 family. In terms of assembly, homotetramer. Requires Mg(2+) as cofactor. Na(+) serves as cofactor.

It catalyses the reaction Hydrolysis of terminal non-reducing beta-D-galactose residues in beta-D-galactosides.. The chain is Beta-galactosidase from Escherichia coli.